A 324-amino-acid polypeptide reads, in one-letter code: Dioxygenase tasH (324 aa).

The signal sequence occupies residues 1–25; the sequence is MRSMSLWMLIGPVTGIATWASLRYA. 3 residues coordinate Zn(2+): His50, His96, and His284.

The protein belongs to the DODA-type extradiol aromatic ring-opening dioxygenase family. As to quaternary structure, monomer. Zn(2+) serves as cofactor.

In terms of biological role, dioxygenase; part of the gene cluster that mediates the biosynthesis of the tetramic acids Sch210971 and Sch210972, potential anti-HIV fungal natural product that contain a decalin core. The PKS module of tasS together with the enoylreductase tasC catalyze the formation of the polyketide unit which is then conjugated to 4-hydroxyl-4-methyl glutamate (HMG) by the condensation domain of the tasS NRPS module. One unique structural feature of Sch210971 and Sch210972 is the tetramic acid motif proposed to be derived from the non-proteinogenic amino acid HMG, by a Dieckmann-type condensation catalyzed by the reductase domain of tasS. The aldolase tasA catalyzes the aldol condensation of 2 molecules of pyruvic acid to yield the intermediate 4-hydroxyl-4-methyl-2-oxoglutarate (HMOG), which can then be stereoselectively transaminated, may be by tasG, to form HMG. The Diels-Alderase tas3 then uses the Dieckmann product of tasS as substrate and catalyzes the Diels-Alder cycloaddition to form the decalin ring of Sch210971 and Sch210972. The protein is Dioxygenase tasH of Hapsidospora irregularis.